The primary structure comprises 185 residues: Ribosome-recycling factor (185 aa).

Residues 132 to 152 (RRDANEQLKKMEKDSELTEDD) are disordered.

The protein belongs to the RRF family.

The protein resides in the cytoplasm. Its function is as follows. Responsible for the release of ribosomes from messenger RNA at the termination of protein biosynthesis. May increase the efficiency of translation by recycling ribosomes from one round of translation to another. The sequence is that of Ribosome-recycling factor from Alkaliphilus metalliredigens (strain QYMF).